The sequence spans 957 residues: UvrABC system protein A (957 aa).

33–40 (GLSGSGKS) is an ATP binding site. A C4-type zinc finger spans residues 252–279 (CPQCGFSIPELEPRMFSFNSPFGACPTC). 2 ABC transporter domains span residues 309-587 (WEPI…AKSL) and 607-935 (PNGR…KYLR). 639 to 646 (GVSGSGKS) lines the ATP pocket. The C4-type zinc finger occupies 738-764 (CEACRGDGIIKIEMHFLPDVYVPCEVC).

The protein belongs to the ABC transporter superfamily. UvrA family. In terms of assembly, forms a heterotetramer with UvrB during the search for lesions.

It localises to the cytoplasm. Its function is as follows. The UvrABC repair system catalyzes the recognition and processing of DNA lesions. UvrA is an ATPase and a DNA-binding protein. A damage recognition complex composed of 2 UvrA and 2 UvrB subunits scans DNA for abnormalities. When the presence of a lesion has been verified by UvrB, the UvrA molecules dissociate. In Halalkalibacterium halodurans (strain ATCC BAA-125 / DSM 18197 / FERM 7344 / JCM 9153 / C-125) (Bacillus halodurans), this protein is UvrABC system protein A.